We begin with the raw amino-acid sequence, 372 residues long: Methylthioribose-1-phosphate isomerase (372 aa).

Residue Asp252 is the Proton donor of the active site.

It belongs to the eIF-2B alpha/beta/delta subunits family. MtnA subfamily.

Its subcellular location is the cytoplasm. The protein resides in the nucleus. It catalyses the reaction 5-(methylsulfanyl)-alpha-D-ribose 1-phosphate = 5-(methylsulfanyl)-D-ribulose 1-phosphate. It participates in amino-acid biosynthesis; L-methionine biosynthesis via salvage pathway; L-methionine from S-methyl-5-thio-alpha-D-ribose 1-phosphate: step 1/6. Functionally, catalyzes the interconversion of methylthioribose-1-phosphate (MTR-1-P) into methylthioribulose-1-phosphate (MTRu-1-P). In Yarrowia lipolytica (strain CLIB 122 / E 150) (Yeast), this protein is Methylthioribose-1-phosphate isomerase.